A 198-amino-acid polypeptide reads, in one-letter code: Na(+)-translocating NADH-quinone reductase subunit E (198 aa).

A run of 6 helical transmembrane segments spans residues 11 to 31, 39 to 59, 77 to 97, 110 to 130, 140 to 160, and 176 to 196; these read SIFI…FLAV, FGLG…NNLV, FLSF…LEMI, GIFL…SFMV, VVYG…LAGI, and LGIT…FSGV.

Belongs to the NqrDE/RnfAE family. In terms of assembly, composed of six subunits; NqrA, NqrB, NqrC, NqrD, NqrE and NqrF.

It localises to the cell inner membrane. The enzyme catalyses a ubiquinone + n Na(+)(in) + NADH + H(+) = a ubiquinol + n Na(+)(out) + NAD(+). In terms of biological role, NQR complex catalyzes the reduction of ubiquinone-1 to ubiquinol by two successive reactions, coupled with the transport of Na(+) ions from the cytoplasm to the periplasm. NqrA to NqrE are probably involved in the second step, the conversion of ubisemiquinone to ubiquinol. In Aliivibrio fischeri (strain ATCC 700601 / ES114) (Vibrio fischeri), this protein is Na(+)-translocating NADH-quinone reductase subunit E.